Reading from the N-terminus, the 322-residue chain is Probable F-box protein At1g60180 (322 aa).

The region spanning 45–88 is the F-box domain; the sequence is FCELSDECIAKILSGCPILESLTLSHCIYLTVLDLSKSLRLRTL.

This Arabidopsis thaliana (Mouse-ear cress) protein is Probable F-box protein At1g60180.